Reading from the N-terminus, the 160-residue chain is Putative pre-16S rRNA nuclease (160 aa).

It belongs to the YqgF nuclease family.

Its subcellular location is the cytoplasm. Could be a nuclease involved in processing of the 5'-end of pre-16S rRNA. The polypeptide is Putative pre-16S rRNA nuclease (Rhodopseudomonas palustris (strain BisB5)).